The sequence spans 448 residues: Probable glycine dehydrogenase (decarboxylating) subunit 1 (448 aa).

The protein belongs to the GcvP family. N-terminal subunit subfamily. The glycine cleavage system is composed of four proteins: P, T, L and H. In this organism, the P 'protein' is a heterodimer of two subunits.

The catalysed reaction is N(6)-[(R)-lipoyl]-L-lysyl-[glycine-cleavage complex H protein] + glycine + H(+) = N(6)-[(R)-S(8)-aminomethyldihydrolipoyl]-L-lysyl-[glycine-cleavage complex H protein] + CO2. In terms of biological role, the glycine cleavage system catalyzes the degradation of glycine. The P protein binds the alpha-amino group of glycine through its pyridoxal phosphate cofactor; CO(2) is released and the remaining methylamine moiety is then transferred to the lipoamide cofactor of the H protein. The sequence is that of Probable glycine dehydrogenase (decarboxylating) subunit 1 from Parvibaculum lavamentivorans (strain DS-1 / DSM 13023 / NCIMB 13966).